The sequence spans 493 residues: MTTVRTRIAPSPTGDPHVGTAYIALFNYCFAKQHGGEFILRIEDTDQLRSTRESEQQIFDALRWLGIDWSEGPDVGGPHGPYRQSERGDIYQKYAQQLVDMGHAFPCFCTAEELDQMRAEQQAKGETPRYDGRALLLSKEEVQRRLDAGEPHVIRMKVPTEGVCVVPDMLRGEVEIPWDRMDMQVLMKTDGLPTYFLANVVDDHLMGITHVLRGEEWLPSAPKLILLYEYFGWDKPQLCYMPLLRNPDKSKLSKRKNPTSVTFYERMGFMPEAMLNYLGRMGWSMPDEREKFSLQEMVDNFDLSRVSLGGPIFDIEKLSWLNGQWLRDLPVEEFASRLKTWALNPDYMMKIAPHVQGRVETFSQVAPLAGFFFAGGVTPDVKLFEHKKLSPEQVRQVMQLILWKLESLRQWEKERIMGCIQAVVEHLELKLRDAMPLMFAAITGQANSVSVTDAMEILGPDLTRFRLRQALDLLGGVSKKENKEWEKLLGSIA.

The 'HIGH' region motif lies at Pro-10–Thr-20. A 'KMSKS' region motif is present at residues Lys-251 to Arg-255. Lys-254 is an ATP binding site.

The protein belongs to the class-I aminoacyl-tRNA synthetase family. Glutamate--tRNA ligase type 1 subfamily. In terms of assembly, monomer.

It is found in the cytoplasm. It carries out the reaction tRNA(Glu) + L-glutamate + ATP = L-glutamyl-tRNA(Glu) + AMP + diphosphate. Its function is as follows. Catalyzes the attachment of glutamate to tRNA(Glu) in a two-step reaction: glutamate is first activated by ATP to form Glu-AMP and then transferred to the acceptor end of tRNA(Glu). This chain is Glutamate--tRNA ligase, found in Pseudomonas syringae pv. syringae (strain B728a).